The sequence spans 597 residues: Sodium/mannose cotransporter SLC5A10 (597 aa).

Over 1–16 the chain is Extracellular; that stretch reads MVADNSTSDPHAPGPQ. The N-linked (GlcNAc...) asparagine glycan is linked to Asn5. A helical membrane pass occupies residues 17–37; the sequence is LSVTDIVVITVYFALNVAVGI. Residues 38–73 are Cytoplasmic-facing; sequence WSSCRASRNTVSGYFLAGRDMTWWPIGASLFGSSEG. Ser49 bears the Phosphoserine mark. The helical transmembrane segment at 74–94 threads the bilayer; sequence SGLFIGLAGSGAAGGLAVAGF. Topologically, residues 95–100 are extracellular; sequence DWNATY. A helical transmembrane segment spans residues 101–121; it reads VLLALAWVFGAIYISSEIVTL. Over 122–137 the chain is Cytoplasmic; the sequence is AEYIQKRFGGQRIRMY. Residues 138-158 form a helical membrane-spanning segment; sequence LSVLSLLLSVFTKISLDLYAG. At 159 to 171 the chain is on the extracellular side; sequence ALFVHICLGWNFY. A helical membrane pass occupies residues 172-194; that stretch reads LSTILTLTITALYTITGGLVAVI. Residues 195–200 lie on the Cytoplasmic side of the membrane; the sequence is YTDALQ. A helical membrane pass occupies residues 201–219; that stretch reads TLIMVVGAVILAIKAFHQI. At 220-265 the chain is on the extracellular side; sequence DGYGQMEAAYARAIPSRTVANTTCHLPRADAMHMFRDPYTGDLPWT. A helical membrane pass occupies residues 266–286; it reads GMTFGLTIMATWYWCTDQVIV. The Cytoplasmic segment spans residues 287–301; it reads QRSLSARNLNHAKAG. The chain crosses the membrane as a helical span at residues 302 to 322; it reads SILASYLKMLPMGLMIMPGMI. At 323 to 367 the chain is on the extracellular side; sequence SRALFPDEVGCVVPSECLRACGAEIGCSNIAYPKLVMELMPVGLR. Residues 368–390 traverse the membrane as a helical segment; that stretch reads GLMIAVMMPALMSSLSSIFNSSS. Residues 391–410 lie on the Cytoplasmic side of the membrane; the sequence is TLFTMDIWRRLRPCASEREL. Residues 411-431 form a helical membrane-spanning segment; it reads LLVGRLVIVVLIGVSVAWIPV. The Extracellular portion of the chain corresponds to 432 to 444; that stretch reads LQGSNGGQLFIYM. The chain crosses the membrane as a helical span at residues 445–465; the sequence is QSVTSSLAPPVTAVFTLGIFW. At 466 to 472 the chain is on the cytoplasmic side; sequence QRANEQG. Residues 473-493 traverse the membrane as a helical segment; that stretch reads AFWGLLAGLAVGATRLVLEFL. At 494 to 514 the chain is on the extracellular side; the sequence is HPAPPCGAADTRPAVLSQLHY. The helical transmembrane segment at 515 to 535 threads the bilayer; that stretch reads LHFAVALFVLTGAVAVGGSLL. Topologically, residues 536–576 are cytoplasmic; it reads TPPPRRHQIENLTWWTLTRDLSLGAKAGDGQTPQRYTFWAR. The chain crosses the membrane as a helical span at residues 577–597; that stretch reads VCGFNAILLMCVNIFFYAYFA.

It belongs to the sodium:solute symporter (SSF) (TC 2.A.21) family. Expressed only in kidney.

The protein localises to the apical cell membrane. The catalysed reaction is D-mannose(out) + Na(+)(out) = D-mannose(in) + Na(+)(in). The enzyme catalyses D-fructopyranose(out) + Na(+)(out) = D-fructopyranose(in) + Na(+)(in). Functionally, electrogenic Na+-coupled sugar symporter that actively transports D-mannose or D-fructose at the plasma membrane, with a Na+ to sugar coupling ratio of 1:1. Transporter activity is driven by a transmembrane Na+ electrochemical gradient set by the Na+/K+ pump. Exclusively recognizes sugar substrates having a pyranose ring with an axial hydroxyl group on carbon 2. Has likely evolved to enable renal reabsorption of D-mannose, an important constituent of oligosaccharide chains of glycoproteins. Contributes to dietary D-fructose reabsorption from glomerular filtrate across the brush border of the kidney. This Oryctolagus cuniculus (Rabbit) protein is Sodium/mannose cotransporter SLC5A10 (SLC5A10).